The chain runs to 228 residues: Ephrin-A5 (228 aa).

The N-terminal stretch at 1–20 (MLHVEMLTLLFLVLWMCVFS) is a signal peptide. Residues 29–162 (ADRYAVYWNS…KLKVFVRPTN (134 aa)) form the Ephrin RBD domain. Residue Asn37 is glycosylated (N-linked (GlcNAc...) asparagine). 2 disulfides stabilise this stretch: Cys62–Cys102 and Cys90–Cys151. Residues 186–205 (EPADDTVHESAEPSRGENAA) are disordered. The segment covering 190 to 200 (DTVHESAEPSR) has biased composition (basic and acidic residues). Residue Asn203 is the site of GPI-anchor amidated asparagine attachment. The propeptide at 204–228 (AAQTPRIPSRLLAILLFLLAMLLTL) is removed in mature form.

This sequence belongs to the ephrin family. In terms of assembly, binds to the receptor tyrosine kinases EPHA2, EPHA3, EPHB1 and EPHB2. Interacts with EPHA8; activates EPHA8. Forms a ternary EFNA5-EPHA3-ADAM10 complex mediating EFNA5 extracellular domain shedding by ADAM10 which regulates the EFNA5-EPHA3 complex internalization and function. As to expression, expressed in brain, heart, placenta and lung.

It is found in the cell membrane. The protein resides in the membrane. The protein localises to the caveola. In terms of biological role, cell surface GPI-bound ligand for Eph receptors, a family of receptor tyrosine kinases which are crucial for migration, repulsion and adhesion during neuronal, vascular and epithelial development. Binds promiscuously Eph receptors residing on adjacent cells, leading to contact-dependent bidirectional signaling into neighboring cells. The signaling pathway downstream of the receptor is referred to as forward signaling while the signaling pathway downstream of the ephrin ligand is referred to as reverse signaling. Induces compartmentalized signaling within a caveolae-like membrane microdomain when bound to the extracellular domain of its cognate receptor. This signaling event requires the activity of the Fyn tyrosine kinase. Activates the EPHA3 receptor to regulate cell-cell adhesion and cytoskeletal organization. With the receptor EPHA2 may regulate lens fiber cells shape and interactions and be important for lens transparency maintenance. May function actively to stimulate axon fasciculation. The interaction of EFNA5 with EPHA5 also mediates communication between pancreatic islet cells to regulate glucose-stimulated insulin secretion. Cognate/functional ligand for EPHA7, their interaction regulates brain development modulating cell-cell adhesion and repulsion. The chain is Ephrin-A5 (Efna5) from Rattus norvegicus (Rat).